A 145-amino-acid chain; its full sequence is 3-hydroxyacyl-[acyl-carrier-protein] dehydratase FabZ (145 aa).

H49 is an active-site residue.

It belongs to the thioester dehydratase family. FabZ subfamily.

The protein localises to the cytoplasm. The catalysed reaction is a (3R)-hydroxyacyl-[ACP] = a (2E)-enoyl-[ACP] + H2O. In terms of biological role, involved in unsaturated fatty acids biosynthesis. Catalyzes the dehydration of short chain beta-hydroxyacyl-ACPs and long chain saturated and unsaturated beta-hydroxyacyl-ACPs. This is 3-hydroxyacyl-[acyl-carrier-protein] dehydratase FabZ from Rickettsia massiliae (strain Mtu5).